Here is a 63-residue protein sequence, read N- to C-terminus: Large ribosomal subunit protein bL35 (63 aa).

Belongs to the bacterial ribosomal protein bL35 family.

This is Large ribosomal subunit protein bL35 from Campylobacter curvus (strain 525.92).